The primary structure comprises 319 residues: Methionyl-tRNA formyltransferase (319 aa).

Residue 115–118 participates in (6S)-5,6,7,8-tetrahydrofolate binding; sequence SLLP.

It belongs to the Fmt family.

The catalysed reaction is L-methionyl-tRNA(fMet) + (6R)-10-formyltetrahydrofolate = N-formyl-L-methionyl-tRNA(fMet) + (6S)-5,6,7,8-tetrahydrofolate + H(+). Attaches a formyl group to the free amino group of methionyl-tRNA(fMet). The formyl group appears to play a dual role in the initiator identity of N-formylmethionyl-tRNA by promoting its recognition by IF2 and preventing the misappropriation of this tRNA by the elongation apparatus. The protein is Methionyl-tRNA formyltransferase of Lactococcus lactis subsp. lactis (strain IL1403) (Streptococcus lactis).